A 463-amino-acid chain; its full sequence is RuvB-like 2 (463 aa).

77–84 (GQPGTGKT) is a binding site for ATP.

It belongs to the RuvB family. In terms of assembly, forms homohexameric rings. Can form a dodecamer with ruvbl1 made of two stacked hexameric rings. Component of the chromatin-remodeling Ino80 complex. Component of some MLL1/MLL complex.

The protein resides in the nucleus. Its subcellular location is the dynein axonemal particle. It carries out the reaction ATP + H2O = ADP + phosphate + H(+). In terms of biological role, has double-stranded DNA-stimulated ATPase activity. Has ATP-dependent DNA helicase (5' to 3') activity suggesting a role in nuclear processes such as recombination and transcription. Represses gene activation mediated by beta-catenin. Proposed core component of the chromatin remodeling Ino80 complex which exhibits DNA- and nucleosome-activated ATPase activity and catalyzes ATP-dependent nucleosome sliding. Involved in the endoplasmic reticulum (ER)-associated degradation (ERAD) pathway where it negatively regulates expression of ER stress response genes. May act as a regulator of embryonic heart growth. The polypeptide is RuvB-like 2 (ruvbl2) (Danio rerio (Zebrafish)).